We begin with the raw amino-acid sequence, 148 residues long: Antitoxin Xre (148 aa).

This sequence belongs to the MbcA/ParS/Xre antitoxin family. In terms of assembly, homodimer. Forms a complex with cognate toxin Rse.

Its function is as follows. Antitoxin component of a type II toxin-antitoxin (TA) system. Neutralizes the activity of cognate toxin Res. This is Antitoxin Xre from Yersinia enterocolitica serotype O:8 / biotype 1B (strain NCTC 13174 / 8081).